We begin with the raw amino-acid sequence, 305 residues long: Putative S-adenosyl-L-methionine-dependent methyltransferase MAB_4607c (305 aa).

Residues Asp-128 and Asp-155 to Leu-156 each bind S-adenosyl-L-methionine.

This sequence belongs to the UPF0677 family.

Functionally, exhibits S-adenosyl-L-methionine-dependent methyltransferase activity. This is Putative S-adenosyl-L-methionine-dependent methyltransferase MAB_4607c from Mycobacteroides abscessus (strain ATCC 19977 / DSM 44196 / CCUG 20993 / CIP 104536 / JCM 13569 / NCTC 13031 / TMC 1543 / L948) (Mycobacterium abscessus).